Consider the following 37-residue polypeptide: Large ribosomal subunit protein bL36 (37 aa).

Belongs to the bacterial ribosomal protein bL36 family.

The chain is Large ribosomal subunit protein bL36 from Deinococcus deserti (strain DSM 17065 / CIP 109153 / LMG 22923 / VCD115).